A 289-amino-acid chain; its full sequence is uncharacterized protein (289 aa).

This is an uncharacterized protein from Schizosaccharomyces pombe (strain 972 / ATCC 24843) (Fission yeast).